A 435-amino-acid polypeptide reads, in one-letter code: Estrogen-related receptor gamma (435 aa).

Positions 1-64 are disordered; it reads MSNKDRHIDS…GLDSPPLYPS (64 aa). Residues 10 to 29 show a composition bias toward polar residues; that stretch reads SSCSSFIKTEPSSPASLTDS. Low complexity predominate over residues 34-47; sequence SPGGSSDASGSYSS. A DNA-binding region (nuclear receptor) is located at residues 102-177; that stretch reads KRLCLVCGDI…VGMLKEGVRL (76 aa). 2 NR C4-type zinc fingers span residues 105 to 125 and 141 to 160; these read CLVCGDIASGYHYGVASCEAC and CPATNECEITKRRRKSCQAC. An NR LBD domain is found at 210-434; it reads PYNKIVSHLL…KLFSEMLEAK (225 aa).

Belongs to the nuclear hormone receptor family. NR3 subfamily. In terms of assembly, homodimer. Interacts with NRIP1, NCOA1 and NCOR2. Binds TLE1, PNRC1 and PNRC2. Binds GRIP1. Acetylated by PCAF/KAT2 (in vitro).

It is found in the nucleus. Functionally, orphan receptor that acts as a transcription activator in the absence of bound ligand. Binds specifically to an estrogen response element and activates reporter genes controlled by estrogen response elements. Induces the expression of PERM1 in the skeletal muscle. This chain is Estrogen-related receptor gamma (ESRRG), found in Pongo abelii (Sumatran orangutan).